A 547-amino-acid polypeptide reads, in one-letter code: CTP synthase (547 aa).

Residues 1–267 (MTKFVFVTGG…AQQTLALLNL (267 aa)) are amidoligase domain. Serine 13 contributes to the CTP binding site. Residue serine 13 participates in UTP binding. Residues 14–19 (SIGKGI) and aspartate 71 each bind ATP. 2 residues coordinate Mg(2+): aspartate 71 and glutamate 141. CTP-binding positions include 148–150 (DIE), 188–193 (KTKPTQ), and lysine 224. UTP-binding positions include 188–193 (KTKPTQ) and lysine 224. A Glutamine amidotransferase type-1 domain is found at 292–534 (EIALVGKYVQ…VKAAVDHYST (243 aa)). An L-glutamine-binding site is contributed by glycine 354. Cysteine 381 (nucleophile; for glutamine hydrolysis) is an active-site residue. L-glutamine is bound by residues 382–385 (LGMQ), glutamate 405, and arginine 462. Active-site residues include histidine 507 and glutamate 509.

It belongs to the CTP synthase family. In terms of assembly, homotetramer.

It catalyses the reaction UTP + L-glutamine + ATP + H2O = CTP + L-glutamate + ADP + phosphate + 2 H(+). The catalysed reaction is L-glutamine + H2O = L-glutamate + NH4(+). The enzyme catalyses UTP + NH4(+) + ATP = CTP + ADP + phosphate + 2 H(+). Its pathway is pyrimidine metabolism; CTP biosynthesis via de novo pathway; CTP from UDP: step 2/2. Allosterically activated by GTP, when glutamine is the substrate; GTP has no effect on the reaction when ammonia is the substrate. The allosteric effector GTP functions by stabilizing the protein conformation that binds the tetrahedral intermediate(s) formed during glutamine hydrolysis. Inhibited by the product CTP, via allosteric rather than competitive inhibition. Functionally, catalyzes the ATP-dependent amination of UTP to CTP with either L-glutamine or ammonia as the source of nitrogen. Regulates intracellular CTP levels through interactions with the four ribonucleotide triphosphates. The protein is CTP synthase of Rippkaea orientalis (strain PCC 8801 / RF-1) (Cyanothece sp. (strain PCC 8801)).